Here is a 394-residue protein sequence, read N- to C-terminus: Chorismate synthase (394 aa).

Residues Arg-42 and Arg-48 each coordinate NADP(+). FMN contacts are provided by residues 137 to 139 (RAS), 258 to 259 (QA), Gly-302, 317 to 321 (KPIAT), and Arg-343.

It belongs to the chorismate synthase family. As to quaternary structure, homotetramer. Requires FMNH2 as cofactor.

The enzyme catalyses 5-O-(1-carboxyvinyl)-3-phosphoshikimate = chorismate + phosphate. Its pathway is metabolic intermediate biosynthesis; chorismate biosynthesis; chorismate from D-erythrose 4-phosphate and phosphoenolpyruvate: step 7/7. Functionally, catalyzes the anti-1,4-elimination of the C-3 phosphate and the C-6 proR hydrogen from 5-enolpyruvylshikimate-3-phosphate (EPSP) to yield chorismate, which is the branch point compound that serves as the starting substrate for the three terminal pathways of aromatic amino acid biosynthesis. This reaction introduces a second double bond into the aromatic ring system. The protein is Chorismate synthase of Streptomyces avermitilis (strain ATCC 31267 / DSM 46492 / JCM 5070 / NBRC 14893 / NCIMB 12804 / NRRL 8165 / MA-4680).